A 223-amino-acid polypeptide reads, in one-letter code: NADH-quinone oxidoreductase subunit C (223 aa).

It belongs to the complex I 30 kDa subunit family. In terms of assembly, NDH-1 is composed of 14 different subunits. Subunits NuoB, C, D, E, F, and G constitute the peripheral sector of the complex.

The protein resides in the cell inner membrane. It catalyses the reaction a quinone + NADH + 5 H(+)(in) = a quinol + NAD(+) + 4 H(+)(out). Its function is as follows. NDH-1 shuttles electrons from NADH, via FMN and iron-sulfur (Fe-S) centers, to quinones in the respiratory chain. The immediate electron acceptor for the enzyme in this species is believed to be ubiquinone. Couples the redox reaction to proton translocation (for every two electrons transferred, four hydrogen ions are translocated across the cytoplasmic membrane), and thus conserves the redox energy in a proton gradient. In Hydrogenovibrio crunogenus (strain DSM 25203 / XCL-2) (Thiomicrospira crunogena), this protein is NADH-quinone oxidoreductase subunit C.